The following is a 1826-amino-acid chain: MGDSKVKVAVRIRPMNRRETDLHTKCVVDVDANKVILNPVNTNLSKGDARGQPKVFAYDHCFWSMDESVKEKYAGQDIVFKCLGENILQNAFDGYNACIFAYGQTGSGKSYTMMGTADQPGLIPRLCSGLFERTQKEENEEQSFKVEVSYMEIYNEKVRDLLDPKGSRQTLKVREHSVLGPYVDGLSKLAVTSYKDIESLMSEGNKSRTVAATNMNEESSRSHAVFKITLTHTLYDVKSGTSGEKVGKLSLVDLAGSERATKTGAAGDRLKEGSNINKSLTTLGLVISALADQSAGKNKNKFVPYRDSVLTWLLKDSLGGNSKTAMVATVSPAADNYDETLSTLRYADRAKHIVNHAVVNEDPNARIIRDLREEVEKLREQLTKAEAMKSPELKDRLEESEKLIQEMTVTWEEKLRKTEEIAQERQKQLESLGISLQSSGIKVGDDKCFLVNLNADPALNELLVYYLKEHTLIGSANSQDIQLCGMGILPEHCIIDITSEGQVMLTPQKNTRTFVNGSSVSSPIQLHHGDRILWGNNHFFRLNLPKKKKKAEREDEDQDPSMKNENSSEQLDVDGDSSSEVSSEVNFNYEYAQMEVTMKALGSNDPMQSILNSLEQQHEEEKRSALERQRLMYEHELEQLRRRLSPEKQNCRSMDRFSFHSPSAQQRLRQWAEEREATLNNSLMRLREQIVKANLLVREANYIAEELDKRTEYKVTLQIPASSLDANRKRGSLLSEPAIQVRRKGKGKQIWSLEKLDNRLLDMRDLYQEWKECEEDNPVIRSYFKRADPFYDEQENHSLIGVANVFLESLFYDVKLQYAVPIINQKGEVAGRLHVEVMRLSGDVGERIAGGDEVAEVSFEKETQENKLVCMVKILQATGLPQHLSHFVFCKYSFWDQQEPVIVAPEVDTSSSSVSKEPHCMVVFDHCNEFSVNITEDFIEHLSEGALAIEVYGHKINDPRKNPALWDLGIIQAKTRSLRDRWSEVTRKLEFWVQILEQNENGEYCPVEVISAKDVPTGGIFQLRQGQSRRVQVEVKSVQESGTLPLMEECILSVGIGCVKVRPLRAPRTHETFHEEEEDMDSYQDRDLERLRRKWLNALTKRQEYLDQQLQKLVSKRDKTEDDADREAQLLEMRLTLTEERNAVMVPSAGSGIPGAPAEWTPVPGMETHIPVIFLDLNADDFSSQDNLDDPEAGGWDATLTGEEEEEFFELQIVKQHDGEVKAEASWDSAVHGCPQLSRGTPVDERLFLIVRVTVQLSHPADMQLVLRKRICVNVHGRQGFAQSLLKKMSHRSSIPGCGVTFEIVSNIPEDAQGVEEREALARMAANVENPASADSEAYIEKYLRSVLAVENLLTLDRLRQEVAVKEQLTGKGKLSRRSISSPNVNRLSGSRQDLIPSYSLGSNKGRWESQQDVSQTTVSRGIAPAPALSVSPQNNHSPDPGLSNLAASYLNPVKSFVPQMPKLLKSLFPVRDEKRGKRPSPLAHQPVPRIMVQSASPDIRVTRMEEAQPEMGPDVLVQTMGAPALKICDKPAKVPSPPPVIAVTAVTPAPEAQDGPPSPLSEASSGYFSHSVSTATLSDALGPGLDAAAPPGSMPTAPEAEPEAPISHPPPPTAVPAEEPPGPQQLVSPGRERPDLEAPAPGSPFRVRRVRASELRSFSRMLAGDPGCSPGAEGNAPAPGAGGQALASDSEEADEVPEWLREGEFVTVGAHKTGVVRYVGPADFQEGTWVGVELDLPSGKNDGSIGGKQYFRCNPGYGLLVRPSRVRRATGPVRRRSTGLRLGAPEARRSATLSGSATNLASLTAALAKADRSHKNPENRKSWAS.

The region spanning 5–353 (KVKVAVRIRP…LRYADRAKHI (349 aa)) is the Kinesin motor domain. 103–110 (GQTGSGKS) contacts ATP. Residues 364-439 (NARIIRDLRE…ESLGISLQSS (76 aa)) adopt a coiled-coil conformation. The region spanning 471 to 535 (TLIGSANSQD…LHHGDRILWG (65 aa)) is the FHA domain. The tract at residues 546-582 (KKKKKAEREDEDQDPSMKNENSSEQLDVDGDSSSEVS) is disordered. Polar residues predominate over residues 561–570 (SMKNENSSEQ). Coiled-coil stretches lie at residues 607–710 (MQSI…LDKR), 752–772 (SLEK…EWKE), and 1096–1143 (LNAL…ERNA). Position 661 is a phosphoserine (Ser661). The segment at 1367–1420 (EQLTGKGKLSRRSISSPNVNRLSGSRQDLIPSYSLGSNKGRWESQQDVSQTTVS) is disordered. Composition is skewed to polar residues over residues 1378 to 1392 (RSIS…SGSR) and 1409 to 1420 (ESQQDVSQTTVS). Ser1379 is subject to Phosphoserine. Ser1381 is modified (phosphoserine; by MARK2). Phosphoserine occurs at positions 1382 and 1391. A Phosphoserine; by MARK2 modification is found at Ser1410. Phosphoserine is present on residues Ser1432, Ser1438, and Ser1537. Thr1545 bears the Phosphothreonine mark. Position 1559 is a phosphoserine (Ser1559). The span at 1579 to 1607 (SDALGPGLDAAAPPGSMPTAPEAEPEAPI) shows a compositional bias: low complexity. Disordered stretches follow at residues 1579-1650 (SDAL…RVRR) and 1662-1698 (MLAG…DEVP). The span at 1608 to 1624 (SHPPPPTAVPAEEPPGP) shows a compositional bias: pro residues. Ser1644 bears the Phosphoserine mark. The segment covering 1671-1688 (PGAEGNAPAPGAGGQALA) has biased composition (low complexity). The CAP-Gly domain occupies 1721–1763 (GPADFQEGTWVGVELDLPSGKNDGSIGGKQYFRCNPGYGLLVR). A Phosphoserine modification is found at Ser1797.

The protein belongs to the TRAFAC class myosin-kinesin ATPase superfamily. Kinesin family. In terms of assembly, binds to DLG1 and DLG4. Interacts (when phosphorylated at Ser-1381 and Ser-1410) with 14-3-3. In terms of processing, phosphorylated at Ser-1381 and Ser-1410 by MARK2, promoting interaction with 14-3-3 and inhibiting microtubule-dependent accumulation and formation of axons. Ubiquitous.

Its subcellular location is the cytoplasm. It localises to the cytoskeleton. The protein localises to the cell projection. The protein resides in the axon. Involved in reorganization of the cortical cytoskeleton. Regulates axon formation by promoting the formation of extra axons. May be functionally important for the intracellular trafficking of MAGUKs and associated protein complexes. The sequence is that of Kinesin-like protein KIF13B (KIF13B) from Homo sapiens (Human).